The sequence spans 134 residues: ATP synthase epsilon chain (134 aa).

It belongs to the ATPase epsilon chain family. F-type ATPases have 2 components, CF(1) - the catalytic core - and CF(0) - the membrane proton channel. CF(1) has five subunits: alpha(3), beta(3), gamma(1), delta(1), epsilon(1). CF(0) has three main subunits: a, b and c.

The protein resides in the cellular thylakoid membrane. Its function is as follows. Produces ATP from ADP in the presence of a proton gradient across the membrane. The chain is ATP synthase epsilon chain from Prochlorococcus marinus (strain AS9601).